We begin with the raw amino-acid sequence, 312 residues long: Ribose-phosphate pyrophosphokinase (312 aa).

ATP-binding positions include 34–36 and 93–94; these read DQE and RQ. Mg(2+)-binding residues include histidine 127 and aspartate 167. Residue lysine 191 is part of the active site. D-ribose 5-phosphate is bound by residues arginine 193, aspartate 217, and 221-225; that span reads DSGGT.

The protein belongs to the ribose-phosphate pyrophosphokinase family. Class I subfamily. As to quaternary structure, homohexamer. Mg(2+) serves as cofactor.

The protein resides in the cytoplasm. It carries out the reaction D-ribose 5-phosphate + ATP = 5-phospho-alpha-D-ribose 1-diphosphate + AMP + H(+). The protein operates within metabolic intermediate biosynthesis; 5-phospho-alpha-D-ribose 1-diphosphate biosynthesis; 5-phospho-alpha-D-ribose 1-diphosphate from D-ribose 5-phosphate (route I): step 1/1. Functionally, involved in the biosynthesis of the central metabolite phospho-alpha-D-ribosyl-1-pyrophosphate (PRPP) via the transfer of pyrophosphoryl group from ATP to 1-hydroxyl of ribose-5-phosphate (Rib-5-P). In Hyphomonas neptunium (strain ATCC 15444), this protein is Ribose-phosphate pyrophosphokinase.